A 431-amino-acid chain; its full sequence is Reverse prenyltransferase criA (431 aa).

The dimethylallyl diphosphate site is built by Arg-104, Lys-193, Tyr-195, Lys-262, Tyr-264, Tyr-347, Tyr-412, and Tyr-416.

It belongs to the tryptophan dimethylallyltransferase family. In terms of assembly, monomer.

It carries out the reaction cyclo(L-tryptophyl-L-alanyl) + dimethylallyl diphosphate = preechinulin + diphosphate. It functions in the pathway secondary metabolite biosynthesis. The protein operates within alkaloid biosynthesis. Functionally, reverse prenyltransferase; part of the gene cluster that mediates the biosynthesis of echinulin family alkaloid. The pathway begins with the biosynthesis of the cyclic dipeptide cyclo-L-Trp-L-Ala (cyclo-TA) by the NRPS criC via condensation of L-alanine and L-tryptophan. The prenyltransferase criA then catalyzes the first prenylation step, a reverse prenylation reaction at C2, to yield preechinulin. Preechinulin is the substrate of the cytochrome P450 monooxygenase criE that catalyzes the formation of the double bond between C10 and C11 to produce neoechulin A. The unique prenyltransferase criF functions as a competitive enzyme with criE for preechinulin metabolization and uses preechinulin for effective regiospecific prenylations. Preechinulin is prenylated by criF at C5 or C7. C7-prenylation leads to accumulation of tardioxopiperazine B without further modification by criF. In contrast, the C5-prenylated tardioxopiperazine A can be prenylated again by criF, predominantly at C7 to form echinulin or less frequently at C4 to give variecolorin L. CriF also accepts neoechilunin A to produce varlecolorin G (prenylation at C5) or isoechinulin A (prenylation at C7). CriF further converts isoechinulin A into dehydroechinulin. Moreover, a yet unidentified enzyme can also convert neoechilunin A into neoechilunin B by introducing a double bond between positions C14 and C17 and thus provides a further substrate to criF for C5 and C7 prenylation. The sequence is that of Reverse prenyltransferase criA from Aspergillus cristatus (Chinese Fuzhuan brick tea-fermentation fungus).